We begin with the raw amino-acid sequence, 205 residues long: LexA repressor (205 aa).

Residues 29–49 (IRDICKATGLRSSSTVYNYLN) constitute a DNA-binding region (H-T-H motif). Active-site for autocatalytic cleavage activity residues include Ser-128 and Lys-165.

Belongs to the peptidase S24 family. As to quaternary structure, homodimer.

It catalyses the reaction Hydrolysis of Ala-|-Gly bond in repressor LexA.. Represses a number of genes involved in the response to DNA damage (SOS response), including recA and lexA. In the presence of single-stranded DNA, RecA interacts with LexA causing an autocatalytic cleavage which disrupts the DNA-binding part of LexA, leading to derepression of the SOS regulon and eventually DNA repair. The chain is LexA repressor from Moorella thermoacetica (strain ATCC 39073 / JCM 9320).